Consider the following 90-residue polypeptide: DNA-directed RNA polymerase subunit omega (90 aa).

The protein belongs to the RNA polymerase subunit omega family. As to quaternary structure, the RNAP catalytic core consists of 2 alpha, 1 beta, 1 beta' and 1 omega subunit. When a sigma factor is associated with the core the holoenzyme is formed, which can initiate transcription.

It catalyses the reaction RNA(n) + a ribonucleoside 5'-triphosphate = RNA(n+1) + diphosphate. Its function is as follows. Promotes RNA polymerase assembly. Latches the N- and C-terminal regions of the beta' subunit thereby facilitating its interaction with the beta and alpha subunits. The polypeptide is DNA-directed RNA polymerase subunit omega (Hamiltonella defensa subsp. Acyrthosiphon pisum (strain 5AT)).